Reading from the N-terminus, the 426-residue chain is Glutamate-1-semialdehyde 2,1-aminomutase (426 aa).

K265 carries the post-translational modification N6-(pyridoxal phosphate)lysine.

This sequence belongs to the class-III pyridoxal-phosphate-dependent aminotransferase family. HemL subfamily. Homodimer. Requires pyridoxal 5'-phosphate as cofactor.

Its subcellular location is the cytoplasm. The enzyme catalyses (S)-4-amino-5-oxopentanoate = 5-aminolevulinate. The protein operates within porphyrin-containing compound metabolism; protoporphyrin-IX biosynthesis; 5-aminolevulinate from L-glutamyl-tRNA(Glu): step 2/2. This Shigella flexneri serotype 5b (strain 8401) protein is Glutamate-1-semialdehyde 2,1-aminomutase.